A 240-amino-acid chain; its full sequence is MMKDPLALQLLGEFLGTFILILLGDGVVAGVTLNKSKAQNAGWVAITLGWGFAVTMGVYASSFMSPAHLNPAVSLGMAVAGKFPWAYVIPYSAAQIAGGVIGGLVVWLHYYPHWQATKDAGAILGIFATGPGIRRYFWNFISEVIGTFVLVFGLLAFTKGQFTAGLNPIVVGILIIAIGLSLGGTTGYAINPARDLGPRIAHAVLPIANKGTSDWAYSWVPIAGPLVGGALGALLFNVLP.

The next 2 helical transmembrane spans lie at 11–31 (LGEF…VAGV) and 41–61 (AGWV…VYAS). Positions 70–72 (NPA) match the NPA 1 motif. Transmembrane regions (helical) follow at residues 88–108 (VIPY…VVWL), 137–157 (FWNF…LLAF), and 162–182 (FTAG…GLSL). An NPA 2 motif is present at residues 191 to 193 (NPA). The chain crosses the membrane as a helical span at residues 219–239 (WVPIAGPLVGGALGALLFNVL).

The protein belongs to the MIP/aquaporin (TC 1.A.8) family.

It localises to the cell membrane. In terms of biological role, transporter that facilitates the transmembrane diffusion of water, dihydroxyacetone, glycerol and H(2)O(2). Is not permeable to urea and D/L-lactic acid. This chain is Glycerol uptake facilitator protein 3, found in Lactiplantibacillus plantarum (strain ATCC BAA-793 / NCIMB 8826 / WCFS1) (Lactobacillus plantarum).